A 267-amino-acid chain; its full sequence is O-methyltransferase (267 aa).

Positions 100 and 145 each coordinate S-adenosyl-L-methionine.

The protein belongs to the methyltransferase superfamily.

Its pathway is antifungal biosynthesis. Functionally, O-methyltransferase; part of the gene cluster that mediates the biosynthesis of the tetrahydropyranyl antifungal agent lanomycin that acts as an inhibitor of CYP51 and blocks the ergosterol biosynthesis. The biosynthesis probably begins with the formation of an hexaketide, followed by methionine mediated alkylation of C-2 and C-6, and methylation of the reduced C-3 oxygen, pyran forming reductive ring closure, oxygenation of C-4, beta-keto reduction, enoyl reduction and dehydration of the remaining oxygens, and finally, acylation with glycine to complete the biosynthesis. In Pyrenophora dematioidea (Helminthosporium dematioideum), this protein is O-methyltransferase.